The following is a 156-amino-acid chain: SsrA-binding protein (156 aa).

This sequence belongs to the SmpB family.

The protein resides in the cytoplasm. Required for rescue of stalled ribosomes mediated by trans-translation. Binds to transfer-messenger RNA (tmRNA), required for stable association of tmRNA with ribosomes. tmRNA and SmpB together mimic tRNA shape, replacing the anticodon stem-loop with SmpB. tmRNA is encoded by the ssrA gene; the 2 termini fold to resemble tRNA(Ala) and it encodes a 'tag peptide', a short internal open reading frame. During trans-translation Ala-aminoacylated tmRNA acts like a tRNA, entering the A-site of stalled ribosomes, displacing the stalled mRNA. The ribosome then switches to translate the ORF on the tmRNA; the nascent peptide is terminated with the 'tag peptide' encoded by the tmRNA and targeted for degradation. The ribosome is freed to recommence translation, which seems to be the essential function of trans-translation. In Shouchella clausii (strain KSM-K16) (Alkalihalobacillus clausii), this protein is SsrA-binding protein.